We begin with the raw amino-acid sequence, 219 residues long: Vesicle-associated membrane protein 712 (219 aa).

Residues 1–189 (MSILYALVAR…NNTVWWRNCK (189 aa)) lie on the Cytoplasmic side of the membrane. The Longin domain maps to 7-111 (LVARGTVVLA…AMNDEFSRVL (105 aa)). Residues 126–186 (TISRIKGEMN…RRFNNTVWWR (61 aa)) form the v-SNARE coiled-coil homology domain. Residues 190 to 210 (LTLLLILVLLVIIYIGVAFAC) form a helical; Anchor for type IV membrane protein membrane-spanning segment. Residues 211-219 (HGPTLPSCV) are Vesicular-facing.

This sequence belongs to the synaptobrevin family. As to expression, expressed in flowers, leaves, stems and roots.

The protein localises to the vacuole membrane. Its subcellular location is the prevacuolar compartment membrane. Its function is as follows. Involved in the targeting and/or fusion of transport vesicles to their target membrane. The protein is Vesicle-associated membrane protein 712 of Arabidopsis thaliana (Mouse-ear cress).